Here is a 191-residue protein sequence, read N- to C-terminus: Leucyl/phenylalanyl-tRNA--protein transferase (191 aa).

This sequence belongs to the L/F-transferase family.

It is found in the cytoplasm. It carries out the reaction N-terminal L-lysyl-[protein] + L-leucyl-tRNA(Leu) = N-terminal L-leucyl-L-lysyl-[protein] + tRNA(Leu) + H(+). The catalysed reaction is N-terminal L-arginyl-[protein] + L-leucyl-tRNA(Leu) = N-terminal L-leucyl-L-arginyl-[protein] + tRNA(Leu) + H(+). The enzyme catalyses L-phenylalanyl-tRNA(Phe) + an N-terminal L-alpha-aminoacyl-[protein] = an N-terminal L-phenylalanyl-L-alpha-aminoacyl-[protein] + tRNA(Phe). In terms of biological role, functions in the N-end rule pathway of protein degradation where it conjugates Leu, Phe and, less efficiently, Met from aminoacyl-tRNAs to the N-termini of proteins containing an N-terminal arginine or lysine. This is Leucyl/phenylalanyl-tRNA--protein transferase from Nostoc punctiforme (strain ATCC 29133 / PCC 73102).